Reading from the N-terminus, the 481-residue chain is Rho GTPase-activating protein 15 (481 aa).

Residues serine 51, serine 111, serine 204, serine 207, and serine 249 each carry the phosphoserine modification. The PH domain maps to 87-197 (MVEKEGYLQK…WFQAIKNAID (111 aa)). Residues 287-476 (SHLHTVCERE…FMLTEYDKIF (190 aa)) enclose the Rho-GAP domain.

The protein resides in the cytoplasm. Its subcellular location is the membrane. Functionally, GTPase activator for the Rho-type GTPases by converting them to an inactive GDP-bound state. Has activity toward RAC1. Overexpression results in an increase in actin stress fibers and cell contraction. The sequence is that of Rho GTPase-activating protein 15 (Arhgap15) from Mus musculus (Mouse).